The primary structure comprises 324 residues: uncharacterized protein (324 aa).

9 consecutive transmembrane segments (helical) span residues 34–54, 76–96, 103–123, 127–147, 158–178, 198–218, 243–263, 275–295, and 297–317; these read MAVLQSLNIFLGEACLWFYVL, VFMALPAIMDICGSTLMNVGL, IYQMTRGSLIIFVALFATTLL, IGQLQWLSLSFVVLGVAIVGY, PILGITAVLIGQFFLATQFTI, GTYGVFFVLLGMIISYYFIGS, YVISGVILVSIAFFNVSGLAI, LDIARTFGIWIIAMAMGMESF, and LLQFLGFVLLIYGIFTYHSII.

It is found in the membrane. This is an uncharacterized protein from Schizosaccharomyces pombe (strain 972 / ATCC 24843) (Fission yeast).